A 155-amino-acid chain; its full sequence is 2-C-methyl-D-erythritol 2,4-cyclodiphosphate synthase (155 aa).

A divalent metal cation-binding residues include D8 and H10. Residues 8–10 (DVH) and 34–35 (HS) contribute to the 4-CDP-2-C-methyl-D-erythritol 2-phosphate site. An a divalent metal cation-binding site is contributed by H42. Residues 56-58 (DIG), 61-65 (FPDTD), 100-106 (AQAPKMA), 132-135 (TTTE), F139, and R142 each bind 4-CDP-2-C-methyl-D-erythritol 2-phosphate.

The protein belongs to the IspF family. In terms of assembly, homotrimer. Requires a divalent metal cation as cofactor.

The catalysed reaction is 4-CDP-2-C-methyl-D-erythritol 2-phosphate = 2-C-methyl-D-erythritol 2,4-cyclic diphosphate + CMP. The protein operates within isoprenoid biosynthesis; isopentenyl diphosphate biosynthesis via DXP pathway; isopentenyl diphosphate from 1-deoxy-D-xylulose 5-phosphate: step 4/6. Its function is as follows. Involved in the biosynthesis of isopentenyl diphosphate (IPP) and dimethylallyl diphosphate (DMAPP), two major building blocks of isoprenoid compounds. Catalyzes the conversion of 4-diphosphocytidyl-2-C-methyl-D-erythritol 2-phosphate (CDP-ME2P) to 2-C-methyl-D-erythritol 2,4-cyclodiphosphate (ME-CPP) with a corresponding release of cytidine 5-monophosphate (CMP). The chain is 2-C-methyl-D-erythritol 2,4-cyclodiphosphate synthase from Saccharophagus degradans (strain 2-40 / ATCC 43961 / DSM 17024).